We begin with the raw amino-acid sequence, 205 residues long: Probable thymidylate kinase (205 aa).

ATP is bound at residue 7–14; the sequence is GIDGAGKS.

The protein belongs to the thymidylate kinase family.

It catalyses the reaction dTMP + ATP = dTDP + ADP. The sequence is that of Probable thymidylate kinase from Thermococcus onnurineus (strain NA1).